The sequence spans 140 residues: ATP synthase epsilon chain (140 aa).

Belongs to the ATPase epsilon chain family. F-type ATPases have 2 components, CF(1) - the catalytic core - and CF(0) - the membrane proton channel. CF(1) has five subunits: alpha(3), beta(3), gamma(1), delta(1), epsilon(1). CF(0) has three main subunits: a, b and c.

The protein resides in the cell inner membrane. Functionally, produces ATP from ADP in the presence of a proton gradient across the membrane. This is ATP synthase epsilon chain from Neisseria meningitidis serogroup C / serotype 2a (strain ATCC 700532 / DSM 15464 / FAM18).